Here is a 489-residue protein sequence, read N- to C-terminus: Ammonium transporter MEP3 (489 aa).

Over 1–17 (MARGDGHLWTETYDSST) the chain is Extracellular. Residues 18–38 (VAFMILGAALVFFMVPGLGFL) form a helical membrane-spanning segment. Residues 39-48 (YSGLARRKSA) are Cytoplasmic-facing. A helical membrane pass occupies residues 49 to 69 (LALIWVVIMATLVGILQWYFW). Topologically, residues 70–108 (GYSLAFSKTATNNKFIGNLDSFGFRNVYGKISDDSTYPE) are extracellular. The chain crosses the membrane as a helical span at residues 109 to 129 (LIYAIFQMMFMCVALSIIAGA). The Cytoplasmic segment spans residues 130 to 139 (TAERGKLFPH). The chain crosses the membrane as a helical span at residues 140–160 (MVFLFVFATLVYCPITYWIWA). Topologically, residues 161-173 (PGGWAYQWGVLDW) are extracellular. The chain crosses the membrane as a helical span at residues 174 to 194 (AGGGNIEILSAVAGFVYSYFL). Over 195-209 (GRRKENLLINFRPHN) the chain is Cytoplasmic. A helical transmembrane segment spans residues 210–230 (VSMVTLGTSILWFGWLLFNAA). Topologically, residues 231–239 (SSLSPNMRS) are extracellular. A helical membrane pass occupies residues 240 to 260 (VYAFMNTCLSATTGGMTWCLL). The Cytoplasmic portion of the chain corresponds to 261-267 (DYRSEKK). A helical membrane pass occupies residues 268 to 288 (WSTVGLCSGIICGLVAATPSS). Position 289 (Gly-289) is a topological domain, extracellular. Residues 290-310 (CITLYGSLIQGIIAGVVCNFA) traverse the membrane as a helical segment. Residues 311-330 (TKIKYYLKVDDSLDLLAEHG) lie on the Cytoplasmic side of the membrane. A helical transmembrane segment spans residues 331 to 351 (IAGVVGLIFNALFAADWVIGM). At 352–372 (DGTTKHKGGWLTHNWKQMYIQ) the chain is on the extracellular side. Residues 373–393 (IAYIGASAGYCAVVTAIICFV) form a helical membrane-spanning segment. Over 394–489 (LGKIPGVHLR…NPKLHHAKEA (96 aa)) the chain is Cytoplasmic. Over residues 448–481 (GANSASETNPTEDSQNSSLSSATVSGQNEKSNNP) the composition is skewed to polar residues. A disordered region spans residues 448 to 489 (GANSASETNPTEDSQNSSLSSATVSGQNEKSNNPKLHHAKEA).

It belongs to the ammonia transporter channel (TC 1.A.11.2) family.

It localises to the membrane. Transporter for ammonium (both charged and uncharged NH3 and NH4) to use as a nitrogen source. The affinity of MEP2 is about twenty times higher than that of MEP1. MEP3 has the lowest affinity. In Saccharomyces cerevisiae (strain ATCC 204508 / S288c) (Baker's yeast), this protein is Ammonium transporter MEP3 (MEP3).